The primary structure comprises 20 residues: Brevinin-1LT (20 aa).

C14 and C20 are disulfide-bonded.

Expressed by the skin glands.

Its subcellular location is the secreted. Its function is as follows. Antimicrobial peptide. The chain is Brevinin-1LT from Rana latastei (Italian agile frog).